The primary structure comprises 117 residues: Conotoxin vil14.2 (117 aa).

A signal peptide spans Met1–Phe22. Residues Glu23–Arg90 constitute a propeptide that is removed on maturation. The segment at Arg53–Arg77 is disordered. The segment covering Arg62–Arg77 has biased composition (basic and acidic residues). Intrachain disulfides connect Cys96–Cys116 and Cys100–Cys112.

It belongs to the conotoxin R superfamily. As to expression, expressed by the venom duct.

It is found in the secreted. This is Conotoxin vil14.2 from Conus villepinii (Villepin's cone).